The following is a 495-amino-acid chain: Zinc finger and SCAN domain-containing protein 5B (495 aa).

A disordered region spans residues methionine 1–proline 40. Polar residues predominate over residues serine 17–glycine 34. Residues histidine 44 to lysine 126 enclose the SCAN box domain. 2 disordered regions span residues alanine 150–glutamine 183 and glutamate 227–glutamine 347. Residues valine 161 to histidine 173 are compositionally biased toward polar residues. A compositionally biased stretch (basic and acidic residues) spans arginine 250–serine 262. Positions asparagine 292–glutamate 310 are enriched in polar residues. 5 C2H2-type zinc fingers span residues phenylalanine 355–histidine 377, phenylalanine 383–histidine 405, tyrosine 411–histidine 433, phenylalanine 439–histidine 461, and tyrosine 467–histidine 489.

It localises to the nucleus. Its function is as follows. May be involved in transcriptional regulation. The sequence is that of Zinc finger and SCAN domain-containing protein 5B (ZSCAN5B) from Homo sapiens (Human).